We begin with the raw amino-acid sequence, 347 residues long: D-alanine--D-alanine ligase (347 aa).

An ATP-grasp domain is found at 131 to 333 (KRVLESAGIA…YPELIERLVD (203 aa)). 161–216 (EEKLAYPVFTKPSNMGSSVGISKSENQEELRQALKLAFRYDSRVLVEQGVNAREIE) contributes to the ATP binding site. Residues Asp287, Glu300, and Asn302 each coordinate Mg(2+).

Belongs to the D-alanine--D-alanine ligase family. It depends on Mg(2+) as a cofactor. Mn(2+) serves as cofactor.

It localises to the cytoplasm. The catalysed reaction is 2 D-alanine + ATP = D-alanyl-D-alanine + ADP + phosphate + H(+). Its pathway is cell wall biogenesis; peptidoglycan biosynthesis. Its function is as follows. Cell wall formation. This is D-alanine--D-alanine ligase from Streptococcus pneumoniae (strain JJA).